A 943-amino-acid chain; its full sequence is Translation initiation factor IF-2 (943 aa).

Residues 30 to 357 are disordered; sequence SVKSHSSSVE…KPVTERKFHE (328 aa). 5 stretches are compositionally biased toward basic and acidic residues: residues 69–82, 112–137, 145–155, 163–196, and 224–253; these read PKEE…DKAS, FKAE…DNRN, QGKRHNNDRRN, DHNK…RDNA, and RQSE…EKQQ. Over residues 254–266 the composition is skewed to low complexity; sequence VKVAVQKAAAETK. Basic and acidic residues predominate over residues 296–309; that stretch reads KSRDNRRVNEDGPK. Over residues 313–332 the composition is skewed to low complexity; it reads NNKWNNQNQVRNQRNSNWNK. The tr-type G domain maps to 445 to 614; sequence ERAPVVTIMG…LLVAEVEELK (170 aa). Positions 454–461 are G1; the sequence is GHVDHGKT. Position 454 to 461 (454 to 461) interacts with GTP; the sequence is GHVDHGKT. The tract at residues 479-483 is G2; that stretch reads GITQH. The segment at 500–503 is G3; the sequence is DTPG. Residues 500-504 and 554-557 each bind GTP; these read DTPGH and NKID. A G4 region spans residues 554 to 557; the sequence is NKID. Residues 590-592 are G5; that stretch reads SAK.

The protein belongs to the TRAFAC class translation factor GTPase superfamily. Classic translation factor GTPase family. IF-2 subfamily.

It is found in the cytoplasm. One of the essential components for the initiation of protein synthesis. Protects formylmethionyl-tRNA from spontaneous hydrolysis and promotes its binding to the 30S ribosomal subunits. Also involved in the hydrolysis of GTP during the formation of the 70S ribosomal complex. This Streptococcus thermophilus (strain ATCC BAA-250 / LMG 18311) protein is Translation initiation factor IF-2.